The sequence spans 463 residues: Sialic acid-binding Ig-like lectin 9 (463 aa).

A signal peptide spans 1–17 (MLLLLLPLLWGRERAEG). Over 18 to 348 (QTSKLLTMQS…SKATSGVTQG (331 aa)) the chain is Extracellular. In terms of domain architecture, Ig-like V-type spans 20-140 (SKLLTMQSSV…KHHRLSVNVT (121 aa)). Cystine bridges form between Cys-36–Cys-170, Cys-41–Cys-102, and Cys-164–Cys-213. N-linked (GlcNAc...) asparagine glycosylation occurs at Asn-101. Arg-120 is a binding site for N-acetylneuraminate. Residues Asn-138 and Asn-161 are each glycosylated (N-linked (GlcNAc...) asparagine). One can recognise an Ig-like C2-type 1 domain in the interval 146 to 229 (PNILIPGTLE…ASVTTNKTVH (84 aa)). 4 N-linked (GlcNAc...) asparagine glycosylation sites follow: Asn-225, Asn-231, Asn-238, and Asn-256. The Ig-like C2-type 2 domain maps to 236-336 (PQNLTMTVFQ…GSQQVYLNVS (101 aa)). A disulfide bridge connects residues Cys-272 and Cys-320. Asn-334 carries an N-linked (GlcNAc...) asparagine glycan. Residues 349 to 369 (VVGGAGATALVFLSFCVIFVV) form a helical membrane-spanning segment. Over 370–463 (VRSCRKKSAR…TEYSEIKIHR (94 aa)) the chain is Cytoplasmic. Residues 380 to 428 (PAAGVGDTGIEDANAVRGSASQGPLTEPWAEDSPPDQPPPASARSSVGE) form a disordered region. Positions 431–436 (LQYASL) match the ITIM motif motif. The disordered stretch occupies residues 444-463 (WDSRGQEATDTEYSEIKIHR). The SLAM-like motif signature appears at 454–459 (TEYSEI).

It belongs to the immunoglobulin superfamily. SIGLEC (sialic acid binding Ig-like lectin) family. Expressed by peripheral blood leukocytes (neutrophils and monocytes but not eosinophils). Found in liver, fetal liver, bone marrow, placenta, spleen and in lower levels in skeletal muscle, fetal brain, stomach, lung, thymus, prostate, brain, mammary, adrenal gland, colon, trachea, cerebellum, testis, small intestine and spinal cordon.

It localises to the membrane. Its function is as follows. Putative adhesion molecule that mediates sialic-acid dependent binding to cells. Preferentially binds to alpha-2,3- or alpha-2,6-linked sialic acid. The sialic acid recognition site may be masked by cis interactions with sialic acids on the same cell surface. This Homo sapiens (Human) protein is Sialic acid-binding Ig-like lectin 9 (SIGLEC9).